The sequence spans 60 residues: Large ribosomal subunit protein bL32 (60 aa).

The tract at residues Met1–Glu60 is disordered. Over residues Arg49–Glu60 the composition is skewed to basic residues.

This sequence belongs to the bacterial ribosomal protein bL32 family.

This chain is Large ribosomal subunit protein bL32, found in Bordetella avium (strain 197N).